We begin with the raw amino-acid sequence, 97 residues long: Probable lipopolysaccharide assembly protein A (97 aa).

The next 2 helical transmembrane spans lie at 1–21 and 46–66; these read MIKYILGIVIFIAIVLVAITI and VAILFGLGLILGWLITAFFYI. The stretch at 67-95 forms a coiled coil; the sequence is KLKLKNMALARQVKRQTLQINELTTTRDK.

This sequence belongs to the LapA family.

It is found in the cell inner membrane. Involved in the assembly of lipopolysaccharide (LPS). This chain is Probable lipopolysaccharide assembly protein A, found in Haemophilus influenzae (strain ATCC 51907 / DSM 11121 / KW20 / Rd).